We begin with the raw amino-acid sequence, 356 residues long: Phosphoribosylformylglycinamidine cyclo-ligase (356 aa).

It belongs to the AIR synthase family.

The protein resides in the cytoplasm. It catalyses the reaction 2-formamido-N(1)-(5-O-phospho-beta-D-ribosyl)acetamidine + ATP = 5-amino-1-(5-phospho-beta-D-ribosyl)imidazole + ADP + phosphate + H(+). Its pathway is purine metabolism; IMP biosynthesis via de novo pathway; 5-amino-1-(5-phospho-D-ribosyl)imidazole from N(2)-formyl-N(1)-(5-phospho-D-ribosyl)glycinamide: step 2/2. This is Phosphoribosylformylglycinamidine cyclo-ligase from Sinorhizobium fredii (strain NBRC 101917 / NGR234).